A 256-amino-acid polypeptide reads, in one-letter code: Trans-aconitate 2-methyltransferase (256 aa).

This sequence belongs to the methyltransferase superfamily. Tam family.

It localises to the cytoplasm. The catalysed reaction is trans-aconitate + S-adenosyl-L-methionine = (E)-3-(methoxycarbonyl)pent-2-enedioate + S-adenosyl-L-homocysteine. Catalyzes the S-adenosylmethionine monomethyl esterification of trans-aconitate. This is Trans-aconitate 2-methyltransferase from Rhodopseudomonas palustris (strain BisB18).